The sequence spans 89 residues: Small ribosomal subunit protein bS20 (89 aa).

It belongs to the bacterial ribosomal protein bS20 family.

Functionally, binds directly to 16S ribosomal RNA. This chain is Small ribosomal subunit protein bS20, found in Wolbachia pipientis subsp. Culex pipiens (strain wPip).